An 84-amino-acid polypeptide reads, in one-letter code: Acetylcholine receptor subunit alpha (84 aa).

2 cysteine pairs are disulfide-bonded: Cys7–Cys21 and Cys71–Cys72. Residue Asn20 is glycosylated (N-linked (GlcNAc...) asparagine).

It belongs to the ligand-gated ion channel (TC 1.A.9) family. Acetylcholine receptor (TC 1.A.9.1) subfamily. Alpha-1/CHRNA1 sub-subfamily. In terms of assembly, one of the alpha chains that assemble within the acetylcholine receptor, a pentamer of two alpha chains, a beta, a delta, and a gamma (in immature muscle) or epsilon (in mature muscle) chains. The muscle heteropentamer composed of alpha-1, beta-1, delta, epsilon subunits interacts with the alpha-conotoxin ImII.

Its subcellular location is the postsynaptic cell membrane. The protein localises to the cell membrane. It catalyses the reaction K(+)(in) = K(+)(out). The catalysed reaction is Na(+)(in) = Na(+)(out). Upon acetylcholine binding, the AChR responds by an extensive change in conformation that affects all subunits and leads to opening of an ion-conducting channel across the plasma membrane. In Felis catus (Cat), this protein is Acetylcholine receptor subunit alpha (CHRNA1).